A 348-amino-acid polypeptide reads, in one-letter code: Nuclear receptor subfamily 1 group I member 3 (348 aa).

Residues Pro8–Ser83 constitute a DNA-binding region (nuclear receptor). The NR C4-type zinc finger occupies Cys11–Cys31. Thr38 is modified (phosphothreonine; by PKC). Residues Cys47–Cys71 form an NR C4-type zinc finger. In terms of domain architecture, NR LBD spans Gly109–Ser348.

This sequence belongs to the nuclear hormone receptor family. NR1 subfamily. As to quaternary structure, heterodimer of NR1I3 and RXR. Interacts with PSMC4. Interacts with ECT2. Directly interacts with DNAJC7; this complex may also include HSP90. Interacts with CRY1. Interacts with CRY2 in a ligand-dependent manner. In terms of processing, phosphorylated at Thr-38 by PKC, dephosphorylation of Thr-38 is required for nuclear translocation and activation.

The protein resides in the nucleus. Its subcellular location is the cytoplasm. It localises to the cytoskeleton. Its function is as follows. Binds and transactivates the retinoic acid response elements that control expression of the retinoic acid receptor beta 2 and alcohol dehydrogenase 3 genes. Transactivates both the phenobarbital responsive element module of the human CYP2B6 gene and the CYP3A4 xenobiotic response element. The polypeptide is Nuclear receptor subfamily 1 group I member 3 (NR1I3) (Pusa sibirica (Baikal seal)).